The primary structure comprises 131 residues: Glycine cleavage system H protein (131 aa).

A Lipoyl-binding domain is found at 24-106 (RVTVGISDHA…YGEGWIFVVE (83 aa)). An N6-lipoyllysine modification is found at Lys-65.

Belongs to the GcvH family. As to quaternary structure, the glycine cleavage system is composed of four proteins: P, T, L and H. The cofactor is (R)-lipoate.

Functionally, the glycine cleavage system catalyzes the degradation of glycine. The H protein shuttles the methylamine group of glycine from the P protein to the T protein. This is Glycine cleavage system H protein from Xanthomonas campestris pv. campestris (strain 8004).